A 130-amino-acid polypeptide reads, in one-letter code: S-adenosylmethionine decarboxylase proenzyme (130 aa).

Residue Ser66 is the Schiff-base intermediate with substrate; via pyruvic acid of the active site. A Pyruvic acid (Ser); by autocatalysis modification is found at Ser66. The Proton acceptor; for processing activity role is filled by His71. The active-site Proton donor; for catalytic activity is Cys86.

The protein belongs to the prokaryotic AdoMetDC family. Type 1 subfamily. Heterotetramer of two alpha and two beta chains arranged as a dimer of alpha/beta heterodimers. Requires pyruvate as cofactor. Post-translationally, is synthesized initially as an inactive proenzyme. Formation of the active enzyme involves a self-maturation process in which the active site pyruvoyl group is generated from an internal serine residue via an autocatalytic post-translational modification. Two non-identical subunits are generated from the proenzyme in this reaction, and the pyruvate is formed at the N-terminus of the alpha chain, which is derived from the carboxyl end of the proenzyme. The post-translation cleavage follows an unusual pathway, termed non-hydrolytic serinolysis, in which the side chain hydroxyl group of the serine supplies its oxygen atom to form the C-terminus of the beta chain, while the remainder of the serine residue undergoes an oxidative deamination to produce ammonia and the pyruvoyl group blocking the N-terminus of the alpha chain.

The enzyme catalyses S-adenosyl-L-methionine + H(+) = S-adenosyl 3-(methylsulfanyl)propylamine + CO2. It functions in the pathway amine and polyamine biosynthesis; S-adenosylmethioninamine biosynthesis; S-adenosylmethioninamine from S-adenosyl-L-methionine: step 1/1. In terms of biological role, catalyzes the decarboxylation of S-adenosylmethionine to S-adenosylmethioninamine (dcAdoMet), the propylamine donor required for the synthesis of the polyamines spermine and spermidine from the diamine putrescine. In Bacillus cereus (strain ATCC 10987 / NRS 248), this protein is S-adenosylmethionine decarboxylase proenzyme.